Here is a 74-residue protein sequence, read N- to C-terminus: Large ribosomal subunit protein bL31 (74 aa).

Zn(2+) is bound by residues cysteine 16, cysteine 18, cysteine 38, and cysteine 41.

Belongs to the bacterial ribosomal protein bL31 family. Type A subfamily. In terms of assembly, part of the 50S ribosomal subunit. It depends on Zn(2+) as a cofactor.

Its function is as follows. Binds the 23S rRNA. The polypeptide is Large ribosomal subunit protein bL31 (Mycobacteroides abscessus (strain ATCC 19977 / DSM 44196 / CCUG 20993 / CIP 104536 / JCM 13569 / NCTC 13031 / TMC 1543 / L948) (Mycobacterium abscessus)).